Here is a 211-residue protein sequence, read N- to C-terminus: Arginine exporter protein ArgO (211 aa).

6 helical membrane passes run 1 to 21, 37 to 57, 68 to 88, 111 to 131, 147 to 167, and 179 to 199; these read MISY…PLGP, LMIA…GIFG, LLAL…FGAL, IIAT…DTFV, WFAL…ALLA, and AQRI…FQLA.

It belongs to the LysE/ArgO transporter (TC 2.A.75) family.

The protein resides in the cell inner membrane. It carries out the reaction L-arginine(in) = L-arginine(out). In terms of biological role, involved in the export of arginine. Important to control the intracellular level of arginine and the correct balance between arginine and lysine. This is Arginine exporter protein ArgO from Salmonella choleraesuis (strain SC-B67).